The primary structure comprises 465 residues: Mothers against decapentaplegic homolog 1 (465 aa).

Residue Met1 is modified to N-acetylmethionine. The 125-residue stretch at 12–136 (PAVKRLLGWK…YKRVESPVLP (125 aa)) folds into the MH1 domain. Zn(2+) contacts are provided by Cys64, Cys109, Cys121, and His126. A disordered region spans residues 162–246 (NEPHMPLNAT…DGSQPMDTNM (85 aa)). Residues 179–212 (PNSHPFPHSPNSSYPNSPGGSSSTYPHSPTSSDP) show a composition bias toward low complexity. The span at 221-232 (DTPPPAYLPPED) shows a compositional bias: pro residues. In terms of domain architecture, MH2 spans 271 to 465 (WCSIVYYELN…SPHNPISSVS (195 aa)). The residue at position 322 (Thr322) is a Phosphothreonine; by MINK1, TNIK and MAP4K4. The segment at 418–428 (KGWGAEYHRQD) is L3 loop. 2 positions are modified to phosphoserine: Ser463 and Ser465.

It belongs to the dwarfin/SMAD family. Found in a complex with SMAD4 and YY1. Interacts with HGS, NANOG and ZCCHC12. Upon C-terminus phosphorylation: forms trimers with another SMAD1 and the co-SMAD SMAD4. Interacts with PEBP2-alpha subunit, CREB-binding protein (CBP), p300, SMURF1, SMURF2, USP15 and HOXC8. Associates with ZNF423 or ZNF521 in response to BMP2 leading to activate transcription of BMP target genes. Interacts with SKOR1. Interacts (via MH2 domain) with LEMD3. Binding to LEMD3 results in at least a partial reduction of receptor-mediated phosphorylation. Forms a ternary complex with PSMB4 and OAZ1 before PSMB4 is incorporated into the 20S proteasome. Interacts (via MH2 domain) with FAM83G (via MH2 domain); in a SMAD4-independent manner. Interacts with ZC3H3. Interacts with TMEM119. Interacts (via MH1 and MH2 domains) with ZNF8. Interacts with RANBP3L; the interaction increases when SMAD1 is not phosphorylated and mediates SMAD1 nuclear export. Interacts with EGR1; this interaction inhibits SMAD1 dephosphorylation. Interacts with SMAD6. Interacts with YAP1. Interacts with MTMR4; negatively regulates BMP signaling through SMAD1 dephosphorylation and retention in endosomes. Phosphorylation of the C-terminal SVS motif by BMP type 1 receptor kinase activates SMAD1 by promoting dissociation from the receptor and trimerization with SMAD4. Phosphorylation by ERK2 MAP kinase in response to EGF or HGF prevents SMAD1 nuclear accumulation and transcriptional activity in response to BMP. Dephosphorylation, probably by PPM1A, induces its export from the nucleus to the cytoplasm. Dephosphorylation is inhibited by association with EGR1. Phosphorylation by CDK8/9 creates binding sites for YAP1, and subsequent phosphorylation by GSK3 switches off YAP1 binding and adds binding sites for SMURF1. Post-translationally, ubiquitinated by SMAD-specific E3 ubiquitin ligase SMURF1, leading to its degradation. Monoubiquitinated, leading to prevent DNA-binding. Deubiquitination by USP15 alleviates inhibition and promotes activation of TGF-beta target genes. Dephosphorylation, probably by PPM1A, induces its export from the nucleus to the cytoplasm. Phospho-SMAD1 is ubiquitinated by CHIP leading to disruption of the SMAD1-SMAD4 complex. In terms of tissue distribution, ubiquitous.

The protein resides in the cytoplasm. It is found in the nucleus. In terms of biological role, transcriptional modulator that plays a role in various cellular processes, including embryonic development, cell differentiation, and tissue homeostasis. Upon BMP ligand binding to their receptors at the cell surface, is phosphorylated by activated type I BMP receptors (BMPRIs) and associates with SMAD4 to form a heteromeric complex which translocates into the nucleus acting as transcription factor. In turn, the hetero-trimeric complex recognizes cis-regulatory elements containing Smad Binding Elements (SBEs) to modulate the outcome of the signaling network. SMAD1/OAZ1/PSMB4 complex mediates the degradation of the CREBBP/EP300 repressor SNIP1. Positively regulates BMP4-induced expression of odontogenic development regulator MSX1 following IPO7-mediated nuclear import. The polypeptide is Mothers against decapentaplegic homolog 1 (Smad1) (Mus musculus (Mouse)).